We begin with the raw amino-acid sequence, 437 residues long: Amino-acid acetyltransferase (437 aa).

The N-acetyltransferase domain occupies 289–429 (ENIRLATSFD…EHYNYQRMSK (141 aa)).

This sequence belongs to the acetyltransferase family. ArgA subfamily.

The protein localises to the cytoplasm. The enzyme catalyses L-glutamate + acetyl-CoA = N-acetyl-L-glutamate + CoA + H(+). Its pathway is amino-acid biosynthesis; L-arginine biosynthesis; N(2)-acetyl-L-ornithine from L-glutamate: step 1/4. This chain is Amino-acid acetyltransferase, found in Actinobacillus pleuropneumoniae serotype 3 (strain JL03).